Reading from the N-terminus, the 154-residue chain is Basic phospholipase A2 PC20 (154 aa).

The signal sequence occupies residues methionine 1–alanine 21. Positions isoleucine 22–leucine 27 are excised as a propeptide. 7 disulfide bridges follow: cysteine 38-cysteine 98, cysteine 54-cysteine 143, cysteine 56-cysteine 72, cysteine 71-cysteine 125, cysteine 78-cysteine 118, cysteine 87-cysteine 111, and cysteine 105-cysteine 116. 3 residues coordinate Ca(2+): tyrosine 55, serine 57, and glycine 59. Histidine 75 is a catalytic residue. Ca(2+) is bound at residue aspartate 76. The active site involves aspartate 119.

This sequence belongs to the phospholipase A2 family. Group I subfamily. D49 sub-subfamily. Ca(2+) is required as a cofactor. Expressed by the venom gland.

It is found in the secreted. It catalyses the reaction a 1,2-diacyl-sn-glycero-3-phosphocholine + H2O = a 1-acyl-sn-glycero-3-phosphocholine + a fatty acid + H(+). In terms of biological role, snake venom phospholipase A2 (PLA2) that inhibits neuromuscular transmission by blocking acetylcholine release from the nerve termini. PLA2 catalyzes the calcium-dependent hydrolysis of the 2-acyl groups in 3-sn-phosphoglycerides. This Laticauda colubrina (Yellow-lipped sea krait) protein is Basic phospholipase A2 PC20.